Here is a 106-residue protein sequence, read N- to C-terminus: MRKIRQGDDVVIIAGKDKGRRGRVIRVYPDQEKLLVENVNVVKRHRKGNPQQGEAGGIIEQEKPIHQSNVALYNPATEKGDRVGIRVLEDGSKARYFKSNNELVDG.

It belongs to the universal ribosomal protein uL24 family. As to quaternary structure, part of the 50S ribosomal subunit.

One of two assembly initiator proteins, it binds directly to the 5'-end of the 23S rRNA, where it nucleates assembly of the 50S subunit. Its function is as follows. One of the proteins that surrounds the polypeptide exit tunnel on the outside of the subunit. This chain is Large ribosomal subunit protein uL24, found in Alkalilimnicola ehrlichii (strain ATCC BAA-1101 / DSM 17681 / MLHE-1).